Reading from the N-terminus, the 459-residue chain is cAMP-dependent protein kinase regulatory subunit (459 aa).

The dimerization and phosphorylation stretch occupies residues 30 to 219; it reads QFCANYFNTK…TLANNLKNNF (190 aa). 2 disordered regions span residues 78 to 109 and 125 to 168; these read VNDR…DTKT and FDVK…PSSK. Positions 95-109 are enriched in basic and acidic residues; the sequence is HSNHDEDPHAKDTKT. Residues 146–168 show a composition bias toward low complexity; that stretch reads KPSSSSQPNQQSASASSKTPSSK. Position 180 is a phosphoserine (Ser-180). 3',5'-cyclic AMP contacts are provided by residues 220-335, Glu-285, Arg-294, 338-454, Glu-404, and Arg-413; these read LFKQ…FLKD and VLKS…KSQD.

This sequence belongs to the cAMP-dependent kinase regulatory chain family. Tetramer, composed of 2 regulatory (R) and 2 catalytic (C) subunits. In the presence of cAMP it dissociates into 2 active monomeric C subunits and an R dimer.

This Candida albicans (strain SC5314 / ATCC MYA-2876) (Yeast) protein is cAMP-dependent protein kinase regulatory subunit (BCY1).